The sequence spans 552 residues: Cytochrome P450 97B1, chloroplastic (552 aa).

Residues M1–R52 constitute a chloroplast transit peptide. C528 serves as a coordination point for heme.

The protein belongs to the cytochrome P450 family. Heme is required as a cofactor.

It localises to the plastid. It is found in the chloroplast membrane. This Pisum sativum (Garden pea) protein is Cytochrome P450 97B1, chloroplastic (CYP97B1).